The primary structure comprises 551 residues: Lysine--tRNA ligase (551 aa).

A 'HIGH' region motif is present at residues 54–62 (PSGLPHIGT). Residues 303–307 (KISKS) carry the 'KMSKS' region motif. Lys-306 lines the ATP pocket.

The protein belongs to the class-I aminoacyl-tRNA synthetase family.

The protein resides in the cytoplasm. The enzyme catalyses tRNA(Lys) + L-lysine + ATP = L-lysyl-tRNA(Lys) + AMP + diphosphate. This chain is Lysine--tRNA ligase, found in Brucella melitensis biotype 1 (strain ATCC 23456 / CCUG 17765 / NCTC 10094 / 16M).